The chain runs to 326 residues: Phenylalanine--tRNA ligase alpha subunit (326 aa).

Glu251 is a Mg(2+) binding site.

The protein belongs to the class-II aminoacyl-tRNA synthetase family. Phe-tRNA synthetase alpha subunit type 1 subfamily. Tetramer of two alpha and two beta subunits. Requires Mg(2+) as cofactor.

The protein localises to the cytoplasm. It carries out the reaction tRNA(Phe) + L-phenylalanine + ATP = L-phenylalanyl-tRNA(Phe) + AMP + diphosphate + H(+). This chain is Phenylalanine--tRNA ligase alpha subunit, found in Idiomarina loihiensis (strain ATCC BAA-735 / DSM 15497 / L2-TR).